The chain runs to 347 residues: GTP 3',8-cyclase (347 aa).

A Radical SAM core domain is found at 12 to 242 (FRPFGVLRLS…QRIDARWPLR (231 aa)). Residue R19 participates in GTP binding. Positions 26 and 30 each coordinate [4Fe-4S] cluster. Y32 serves as a coordination point for S-adenosyl-L-methionine. C33 is a [4Fe-4S] cluster binding site. R65 contacts GTP. Residue G69 coordinates S-adenosyl-L-methionine. Residue T104 participates in GTP binding. S129 is an S-adenosyl-L-methionine binding site. K178 serves as a coordination point for GTP. M212 serves as a coordination point for S-adenosyl-L-methionine. Residues C275 and C278 each contribute to the [4Fe-4S] cluster site. 280-282 (RLR) serves as a coordination point for GTP. C292 is a binding site for [4Fe-4S] cluster.

This sequence belongs to the radical SAM superfamily. MoaA family. Monomer and homodimer. Requires [4Fe-4S] cluster as cofactor.

The enzyme catalyses GTP + AH2 + S-adenosyl-L-methionine = (8S)-3',8-cyclo-7,8-dihydroguanosine 5'-triphosphate + 5'-deoxyadenosine + L-methionine + A + H(+). Its pathway is cofactor biosynthesis; molybdopterin biosynthesis. Functionally, catalyzes the cyclization of GTP to (8S)-3',8-cyclo-7,8-dihydroguanosine 5'-triphosphate. The protein is GTP 3',8-cyclase of Synechococcus sp. (strain WH7803).